The following is a 220-amino-acid chain: MKLSNLLLFANVGTLLVKATDENISPNEENTPRYAQFNIDYSVLDQPNYDPMAPMEFENGENITLAFNFANNEEVPVKLIAVGGNIINARSGDEVANITRSSLGEIEVDVNTSVSFNQAINLKLDEGDYFLLPNVFVLKEGELMAVGTSPSRIKILPPPMSFFNPKFLSIQAVLIGVISYFTYFIFRSSKKERRGVVSKTKAPKKVKLDESWLPENHLKK.

The signal sequence occupies residues 1–19 (MKLSNLLLFANVGTLLVKA). The Lumenal segment spans residues 20 to 166 (TDENISPNEE…PPPMSFFNPK (147 aa)). A helical membrane pass occupies residues 167 to 186 (FLSIQAVLIGVISYFTYFIF). Residues 187–220 (RSSKKERRGVVSKTKAPKKVKLDESWLPENHLKK) are Cytoplasmic-facing.

Belongs to the IRC22 family.

The protein localises to the endoplasmic reticulum membrane. In terms of biological role, is probably involved in a pathway contributing to genomic integrity. The chain is Increased recombination centers protein 22 (IRC22) from Eremothecium gossypii (strain ATCC 10895 / CBS 109.51 / FGSC 9923 / NRRL Y-1056) (Yeast).